The sequence spans 440 residues: Phosphatidylcholine-sterol acyltransferase (440 aa).

Residues 1-24 (MGPPGSPWQWVLLLLGLLLPPAAP) form the signal peptide. Asparagine 44 carries an N-linked (GlcNAc...) asparagine glycan. Cysteine 74 and cysteine 98 are disulfide-bonded. Asparagine 108 carries an N-linked (GlcNAc...) asparagine glycan. Serine 205 (nucleophile) is an active-site residue. Residue asparagine 296 is glycosylated (N-linked (GlcNAc...) asparagine). The cysteines at positions 337 and 380 are disulfide-linked. Active-site charge relay system residues include aspartate 369 and histidine 401. Asparagine 408 carries an N-linked (GlcNAc...) asparagine glycan.

This sequence belongs to the AB hydrolase superfamily. Lipase family. As to expression, detected in blood plasma (at protein level). Highly expressed in liver.

The protein resides in the secreted. The enzyme catalyses a sterol + a 1,2-diacyl-sn-glycero-3-phosphocholine = a sterol ester + a 1-acyl-sn-glycero-3-phosphocholine. It carries out the reaction a 1-O-alkyl-2-acetyl-sn-glycero-3-phosphocholine + H2O = a 1-O-alkyl-sn-glycero-3-phosphocholine + acetate + H(+). The catalysed reaction is a 1-hexadecanoyl-2-acyl-sn-glycero-3-phosphocholine + (24S)-hydroxycholesterol = (24S)-24-hydroxycholesterol ester + 1-hexadecanoyl-sn-glycero-3-phosphocholine. It catalyses the reaction (24S)-hydroxycholesterol + 1-hexadecanoyl-2-(9Z,12Z-octadecadienoyl)-sn-glycero-3-phosphocholine = (24S)-hydroxycholesterol 3-linoleoate + 1-hexadecanoyl-sn-glycero-3-phosphocholine. The enzyme catalyses 1-hexadecanoyl-2-(5Z,8Z,11Z,14Z-eicosatetraenoyl)-sn-glycero-3-phosphocholine + cholesterol = cholesteryl (5Z,8Z,11Z,14Z)-eicosatetraenoate + 1-hexadecanoyl-sn-glycero-3-phosphocholine. It carries out the reaction 1-hexadecanoyl-2-(9Z-octadecenoyl)-sn-glycero-3-phosphocholine + cholesterol = cholesteryl (9Z-octadecenoate) + 1-hexadecanoyl-sn-glycero-3-phosphocholine. The catalysed reaction is 1-hexadecanoyl-2-(8Z,11Z,14Z-eicosatrienoyl)-sn-glycero-3-phosphocholine + cholesterol = cholesteryl (8Z,11Z,14Z)-eicosatrienoate + 1-hexadecanoyl-sn-glycero-3-phosphocholine. It catalyses the reaction 1-hexadecanoyl-2-(5Z,8Z,11Z-eicosatrienoyl)-sn-glycero-3-phosphocholine + cholesterol = cholesteryl (5Z,8Z,11Z)-eicosatrienoate + 1-hexadecanoyl-sn-glycero-3-phosphocholine. The enzyme catalyses 1-hexadecanoyl-2-(5Z,8Z,11Z,14Z,17Z-eicosapentaenoyl)-sn-glycero-3-phosphocholine + cholesterol = (5Z,8Z,11Z,14Z,17Z-eicosapentaenoyl)-cholesterol + 1-hexadecanoyl-sn-glycero-3-phosphocholine. It carries out the reaction 1-hexadecanoyl-2-(9Z,12Z-octadecadienoyl)-sn-glycero-3-phosphocholine + cholesterol = cholesteryl (9Z,12Z)-octadecadienoate + 1-hexadecanoyl-sn-glycero-3-phosphocholine. The catalysed reaction is 1-hexadecanoyl-2-(6Z,9Z,12Z-octadecatrienoyl)-sn-glycero-3-phosphocholine + cholesterol = (6Z,9Z,12Z-octadecatrienoyl)-cholesterol + 1-hexadecanoyl-sn-glycero-3-phosphocholine. It catalyses the reaction 1-hexadecanoyl-2-(11Z,14Z,17Z-eicosatrienoyl)-sn-glycero-3-phosphocholine + cholesterol = (11Z,14Z,17Z-eicosatrienoyl)-cholesterol + 1-hexadecanoyl-sn-glycero-3-phosphocholine. The enzyme catalyses 1-hexadecanoyl-2-(9Z,12Z,15Z-octadecatrienoyl)-sn-glycero-3-phosphocholine + cholesterol = (9Z,12Z,15Z-octadecatrienoyl)-cholesterol + 1-hexadecanoyl-sn-glycero-3-phosphocholine. It carries out the reaction 1-hexadecanoyl-2-(9Z,12Z-octadecadienoyl)-sn-glycero-3-phosphocholine + H2O = (9Z,12Z)-octadecadienoate + 1-hexadecanoyl-sn-glycero-3-phosphocholine + H(+). The catalysed reaction is 1-hexadecanoyl-2-(5Z,8Z,11Z,14Z-eicosatetraenoyl)-sn-glycero-3-phosphocholine + H2O = 1-hexadecanoyl-sn-glycero-3-phosphocholine + (5Z,8Z,11Z,14Z)-eicosatetraenoate + H(+). It catalyses the reaction a 1-O-alkyl-2-acetyl-sn-glycero-3-phosphocholine + 1-hexadecanoyl-sn-glycero-3-phosphocholine = 1-hexadecanoyl-2-acetyl-sn-glycero-3-phosphocholine + a 1-O-alkyl-sn-glycero-3-phosphocholine. In terms of biological role, central enzyme in the extracellular metabolism of plasma lipoproteins. Synthesized mainly in the liver and secreted into plasma where it converts cholesterol and phosphatidylcholines (lecithins) to cholesteryl esters and lysophosphatidylcholines on the surface of high and low density lipoproteins (HDLs and LDLs). The cholesterol ester is then transported back to the liver. Also produced in the brain by primary astrocytes, and esterifies free cholesterol on nascent APOE-containing lipoproteins secreted from glia and influences cerebral spinal fluid (CSF) APOE- and APOA1 levels. Together with APOE and the cholesterol transporter ABCA1, plays a key role in the maturation of glial-derived, nascent lipoproteins. Required for remodeling high-density lipoprotein particles into their spherical forms. Has a preference for plasma 16:0-18:2 or 18:O-18:2 phosphatidylcholines. Catalyzes the hydrolysis of 1-O-alkyl-2-acetyl-sn-glycero-3-phosphocholine (platelet-activating factor or PAF) to 1-O-alkyl-sn-glycero-3-phosphocholine (lyso-PAF). Also catalyzes the transfer of the acetate group from PAF to 1-hexadecanoyl-sn-glycero-3-phosphocholine forming lyso-PAF. Catalyzes the esterification of (24S)-hydroxycholesterol (24(S)OH-C), also known as cerebrosterol to produce 24(S)OH-C monoesters. This chain is Phosphatidylcholine-sterol acyltransferase (LCAT), found in Oryctolagus cuniculus (Rabbit).